Reading from the N-terminus, the 129-residue chain is UPF0212 protein MA_1372 (129 aa).

The protein belongs to the UPF0212 family.

This Methanosarcina acetivorans (strain ATCC 35395 / DSM 2834 / JCM 12185 / C2A) protein is UPF0212 protein MA_1372.